A 1726-amino-acid chain; its full sequence is Protein Shroom2 (1726 aa).

In terms of domain architecture, PDZ spans 79–159 (AGGCYSYWRG…ILKMIVKRRN (81 aa)). Disordered stretches follow at residues 294–373 (DNTK…RSDS), 425–451 (RTVADTRRTSNSSYHAGLNADQGLSPY), 657–676 (FSQLDHSEKGSYRSSQDYSW), and 697–785 (EGRN…STYR). A compositionally biased stretch (polar residues) spans 318 to 328 (VLQSTSINETS). A compositionally biased stretch (basic and acidic residues) spans 329-338 (KIQRTEDNTE). Positions 657 to 667 (FSQLDHSEKGS) are enriched in basic and acidic residues. Composition is skewed to polar residues over residues 746 to 755 (SKSTAALTES) and 769 to 785 (LESMSPTSEGSFSSTYR). An ASD1 domain is found at 788–877 (LQEAQARVLR…SEPEKINEVG (90 aa)). Disordered stretches follow at residues 913-968 (PKVP…DKVT), 1007-1080 (LDAD…QCGA), 1092-1120 (KWKPHDKSFPIPETSNESQQSRARSGTLP), 1166-1240 (FKKR…KNPS), 1269-1299 (SSKSHLQIPGMEPSRSPSPQFAPQKLTDKPP), and 1471-1499 (AQQRRKHLPKIPSPRSTDDKKDEQNVPSA). The segment covering 917 to 926 (PKVVSSSQSE) has biased composition (low complexity). Basic and acidic residues predominate over residues 936 to 948 (DYAKSSEGQESKR). Polar residues-rich tracts occupy residues 1054 to 1070 (NSNSTHCRSSTGDSPTR) and 1104 to 1119 (ETSNESQQSRARSGTL). The segment covering 1191 to 1205 (SSSSLATSSESLLTA) has biased composition (low complexity). The segment covering 1209–1235 (RAQSYSPSSQDTFPPQSLQKQSPSTYP) has biased composition (polar residues). In terms of domain architecture, ASD2 spans 1427-1721 (EELVREIVDK…QLKCLTDSLP (295 aa)).

Belongs to the shroom family. In terms of assembly, interacts with F-actin.

It localises to the apical cell membrane. It is found in the cell junction. The protein localises to the tight junction. Its subcellular location is the cytoplasm. The protein resides in the cytoskeleton. Its function is as follows. May be involved in endothelial cell morphology changes during cell spreading. Required for eye pigmentation. In the retinal pigment epithelium, regulates the biogenesis of melanosomes and promotes their association with the apical cell surface by inducing gamma-tubulin redistribution. In Xenopus tropicalis (Western clawed frog), this protein is Protein Shroom2 (shroom2).